Consider the following 269-residue polypeptide: Hemin import ATP-binding protein HmuV (269 aa).

Residues 2–242 (LEVIHTGLNI…AMVEACFDLP (241 aa)) enclose the ABC transporter domain. 34-41 (GPNGAGKS) serves as a coordination point for ATP.

Belongs to the ABC transporter superfamily. Heme (hemin) importer (TC 3.A.1.14.5) family. As to quaternary structure, the complex is composed of two ATP-binding proteins (HmuV), two transmembrane proteins (HmuU) and a solute-binding protein (HmuT).

The protein resides in the cell inner membrane. Functionally, part of the ABC transporter complex HmuTUV involved in hemin import. Responsible for energy coupling to the transport system. The polypeptide is Hemin import ATP-binding protein HmuV (Methylobacillus flagellatus (strain ATCC 51484 / DSM 6875 / VKM B-1610 / KT)).